The primary structure comprises 677 residues: MAKLLLLHAPHVIPRFSSSSSRSLVSAAALYRRPLLVNPQFSHIGPRLHSPYNRRFSARAFDDSPASSAEMEKEKQEQLLDGVSGKKDEDYPTGEMEYENRNAWEIFVVKFRMLFAYPWQRVRKGSVLTMTLRGQISDQLKSRFNSGLSLPQLSENFVKAAYDPRIAGVYLHIDPLSCGWGKVEEIRRHILNFKKSGKFIVGYISICGLKEYYLGCACNELFAPPSAYSFLYGLTVQASFLGGVFEKVGIEPQVQRIGKYKSAGDQLSRKSISEENYEMLSVLLDNIYSNWLDGVSDATGKKREDVENFINQGVYEIEKLKEAGLIKDIRYDDEVITMLKERLGVEKDKKLPTVDYKKYSGVKKWTLGLTGGRDQIAIIRAGGSISRVKGPLSTPGSAIIAEQLIEKIRSVRESKKYKAAIIRIDSPGGDALASDLMWREIKLLAETKPVIASMSDVAASGGYYMAMAANAIVAENLTLTGSIGVVTARFTLAKLYEKIGFNKETISRGKYAELLGAEERPLKPEEAELFEKSAQHAYQLFRDKAALSRSMPVDKMEEVAQGRVWTGKDAHSRGLIDAVGGLSRAIAIAKQKANIPLNKKVTLVELSRPSTSLPDILSGIGSSVIGVDRTLKGLLDELTITEGVQARMDGIMFQQLGRDSLATPIIDMLKDYLSSLR.

The N-terminal 68 residues, 1 to 68 (MAKLLLLHAP…RAFDDSPASS (68 aa)), are a transit peptide targeting the chloroplast. Residues 63–94 (DSPASSAEMEKEKQEQLLDGVSGKKDEDYPTG) are disordered. Positions 70–90 (EMEKEKQEQLLDGVSGKKDED) are enriched in basic and acidic residues. The active-site Nucleophile is serine 460.

It belongs to the peptidase S49 family.

The protein resides in the plastid. It localises to the chloroplast stroma. The protein localises to the chloroplast thylakoid membrane. Its function is as follows. Serine protease that may be involved in the light-dependent degradation of antenna and photosystem II in chloroplasts. May function during high light acclimation in plastids. In Arabidopsis thaliana (Mouse-ear cress), this protein is Serine protease SPPA, chloroplastic (SPPA).